A 149-amino-acid polypeptide reads, in one-letter code: UPF0260 protein Psyr_1567 (149 aa).

Belongs to the UPF0260 family.

The sequence is that of UPF0260 protein Psyr_1567 from Pseudomonas syringae pv. syringae (strain B728a).